We begin with the raw amino-acid sequence, 191 residues long: Putative inactive glutathione hydrolase 4 (191 aa).

The Nucleophile role is filled by Thr54. L-glutamate is bound by residues Thr72, Asn74, Glu93, Asp96, 126–127 (SS), and 147–148 (GG).

Belongs to the gamma-glutamyltransferase family. Expressed at low levels in embryo, roots and leaves. In mature plants, expression is restricted to vascular tissues of roots, leaves, flowers and siliques.

This Arabidopsis thaliana (Mouse-ear cress) protein is Putative inactive glutathione hydrolase 4 (GGT4).